The following is a 406-amino-acid chain: Argininosuccinate synthase (406 aa).

Residues 12–20 and Ala-40 each bind ATP; that span reads AYSGGLDTS. L-citrulline contacts are provided by Tyr-92 and Ser-97. ATP is bound at residue Gly-122. The L-aspartate site is built by Thr-124, Asn-128, and Asp-129. Asn-128 contacts L-citrulline. 5 residues coordinate L-citrulline: Arg-132, Ser-181, Ser-190, Glu-266, and Tyr-278.

This sequence belongs to the argininosuccinate synthase family. Type 1 subfamily. Homotetramer.

Its subcellular location is the cytoplasm. The catalysed reaction is L-citrulline + L-aspartate + ATP = 2-(N(omega)-L-arginino)succinate + AMP + diphosphate + H(+). It functions in the pathway amino-acid biosynthesis; L-arginine biosynthesis; L-arginine from L-ornithine and carbamoyl phosphate: step 2/3. This is Argininosuccinate synthase from Serratia proteamaculans (strain 568).